We begin with the raw amino-acid sequence, 945 residues long: Splicing factor, suppressor of white-apricot homolog (945 aa).

Disordered stretches follow at residues 1–28 (MYGA…GTGT) and 156–185 (DYYD…EENE). Basic and acidic residues-rich tracts occupy residues 9–21 (AKPE…KEEA) and 169–178 (PSKQREKNEA). An SURP motif 1 repeat occupies 211 to 253 (IIERTANFVCKQGAQFEIMLKAKQARNSQFDFLRFDHYLNPYY). The tract at residues 271 to 301 (SKNEEKKKSGPTSDNEEEDDEEDGSYLHPSL) is disordered. Ser283 is modified (phosphoserine). Acidic residues predominate over residues 284–294 (DNEEEDDEEDG). Lys315 is subject to N6-acetyllysine. Disordered stretches follow at residues 332 to 355 (KAQA…PSQV) and 403 to 448 (SSSP…PVAI). Residues 335-352 (ADSSAPAPPTADGTPAQP) show a composition bias toward low complexity. The segment covering 412 to 426 (VPPPPGTTPPPPPTT) has biased composition (pro residues). Positions 427–447 (AEPSSGVTSTTTTTSALAPVA) are enriched in low complexity. The SURP motif 2 repeat unit spans residues 458–498 (VIDKLAEYVARNGLKFETSVRAKNDQRFEFLQPWHQYNAYY). Disordered regions lie at residues 512–564 (GSTQ…KSTV), 589–680 (PLEK…QAER), and 712–921 (DTGV…VQSK). The segment covering 514-527 (TQAASTAEEAPTET) has biased composition (low complexity). The segment covering 528 to 540 (AVEESGEAGEDGA) has biased composition (acidic residues). Over residues 589-598 (PLEKNRVKLD) the composition is skewed to basic and acidic residues. A phosphoserine mark is found at Ser601 and Ser621. A compositionally biased stretch (low complexity) spans 615–630 (SSVANPSPAAAPPSVA). Residues 632–686 (EEKKPQLTQEELEAKQAKQKLEDRLAAAAREKLAQASKESKEKQLQAERKRKAAL) adopt a coiled-coil conformation. A Phosphothreonine modification is found at Thr639. 2 stretches are compositionally biased toward basic and acidic residues: residues 643-679 (LEAK…LQAE) and 733-752 (KPPE…EERE). 2 stretches are compositionally biased toward basic residues: residues 753-787 (KKKK…KAKH) and 795-810 (TVRR…RRRA). Positions 811-821 (HSPERRREERS) are enriched in basic and acidic residues. Residues Ser829 and Ser831 each carry the phosphoserine modification. Over residues 835-861 (SRKRTRSRSPHEKKKKRRSRSRTKAKA) the composition is skewed to basic residues. Over residues 871–894 (QAAQRPSAHSAHSASISPVESRGS) the composition is skewed to low complexity. Basic and acidic residues predominate over residues 895–908 (SQERSRGVSQEKDG). A phosphoserine mark is found at Ser899 and Ser903. Positions 909–920 (QISSAIVSSVQS) are enriched in low complexity.

The protein localises to the nucleus. Plays a role as an alternative splicing regulator. Regulates its own expression at the level of RNA processing. Also regulates the splicing of fibronectin and CD45 genes. May act, at least in part, by interaction with other R/S-containing splicing factors. Represses the splicing of MAPT/Tau exon 10. The polypeptide is Splicing factor, suppressor of white-apricot homolog (Sfswap) (Mus musculus (Mouse)).